The chain runs to 350 residues: (RS)-norcoclaurine 6-O-methyltransferase (350 aa).

Residue M166 coordinates S-adenosyl-L-methionine. D169 contacts substrate. S-adenosyl-L-methionine is bound by residues T170, G195, D218, 238–239 (DM), and K252. Substrate-binding positions include 253–257 (CILHD) and D306. The active-site Proton acceptor is H256.

This sequence belongs to the class I-like SAM-binding methyltransferase superfamily. Cation-independent O-methyltransferase family. COMT subfamily. Homodimer. Expressed in leaf primordia of rhizomes and root endodermis.

The enzyme catalyses (S)-norcoclaurine + S-adenosyl-L-methionine = (S)-coclaurine + S-adenosyl-L-homocysteine + H(+). It carries out the reaction norcoclaurine + S-adenosyl-L-methionine = coclaurine + S-adenosyl-L-homocysteine + H(+). With respect to regulation, inhibited by sanguinarine. Its function is as follows. Involved in the biosynthesis of coclaurine, a precursor of benzylisoquinoline alkaloids. Catalyzes the transfer of the S-methyl group of S-adenosyl-L-methionine (AdoMet) to the 6-hydroxyl group of norcoclaurine to form coclaurine. The polypeptide is (RS)-norcoclaurine 6-O-methyltransferase (Thalictrum flavum subsp. glaucum (Yellow meadow rue)).